The following is a 523-amino-acid chain: Polypyrimidine tract-binding protein 3 (523 aa).

The disordered stretch occupies residues 1–25; the sequence is MNNSTSAGVYANGNDNKKFKGDRPP. 3 consecutive RRM domains span residues 30 to 114, 153 to 229, and 329 to 403; these read RVLH…NLPN, LRII…FSKL, and SVLL…LSKH. K36 is covalently cross-linked (Glycyl lysine isopeptide (Lys-Gly) (interchain with G-Cter in SUMO2)). A Phosphotyrosine modification is found at Y98. T109 is modified (phosphothreonine). Residue K187 forms a Glycyl lysine isopeptide (Lys-Gly) (interchain with G-Cter in SUMO2) linkage. K394 is modified (N6-acetyllysine). The segment at 406 to 426 is disordered; it reads VQLPREGQEDQGLTKDFSNSP. S425 carries the phosphoserine modification. In terms of domain architecture, RRM 4 spans 446 to 521; it reads ATLHLSNIPP…HHLRVSFSKS (76 aa).

In terms of assembly, interacts with THBS4 (via the acidic amphipathic C-terminus). As to expression, detected specifically in spleen, thymus, lungs, and bone marrow.

Functionally, RNA-binding protein that mediates pre-mRNA alternative splicing regulation. Plays a role in the regulation of cell proliferation, differentiation and migration. Positive regulator of EPO-dependent erythropoiesis. Participates in cell differentiation regulation by repressing tissue-specific exons. Promotes Fas exon 6 skipping. Binds RNA, preferentially to both poly(G) and poly(U). The sequence is that of Polypyrimidine tract-binding protein 3 (Ptbp3) from Rattus norvegicus (Rat).